Consider the following 435-residue polypeptide: Matrix remodeling-associated protein 8 (435 aa).

The signal sequence occupies residues Met1–Leu22. Over Tyr23–Gln337 the chain is Extracellular. Ig-like V-type domains are found at residues Pro32–Thr158 and Asn156–Ser293. Residues Asn41, Asn120, Asn156, Asn245, and Asn324 are each glycosylated (N-linked (GlcNAc...) asparagine). Cysteines 54 and 138 form a disulfide. An intrachain disulfide couples Cys187 to Cys273. A helical membrane pass occupies residues Leu338–Ile358. Residues Thr359–Lys435 are Cytoplasmic-facing.

In terms of assembly, homodimer in cis. Does not appear to form trans-homodimers.

The protein resides in the cell membrane. In terms of biological role, transmembrane protein which can modulate activity of various signaling pathways, probably via binding to integrin ITGAV:ITGB3. Mediates heterophilic cell-cell interactions in vitro. This Xenopus laevis (African clawed frog) protein is Matrix remodeling-associated protein 8 (mxra8).